Reading from the N-terminus, the 299-residue chain is uncharacterized protein (299 aa).

Residues 1–20 (MTTKHELVINTNEPSAPNAD) are disordered. A helical transmembrane segment spans residues 172 to 192 (SFFIPPMVVISTPICLGLTVF).

It belongs to the IIV-6 259R family.

Its subcellular location is the membrane. This is an uncharacterized protein from Acheta domesticus (House cricket).